An 87-amino-acid polypeptide reads, in one-letter code: Small ribosomal subunit protein uS15 (87 aa).

It belongs to the universal ribosomal protein uS15 family. Part of the 30S ribosomal subunit. Forms a bridge to the 50S subunit in the 70S ribosome, contacting the 23S rRNA.

Functionally, one of the primary rRNA binding proteins, it binds directly to 16S rRNA where it helps nucleate assembly of the platform of the 30S subunit by binding and bridging several RNA helices of the 16S rRNA. Its function is as follows. Forms an intersubunit bridge (bridge B4) with the 23S rRNA of the 50S subunit in the ribosome. This chain is Small ribosomal subunit protein uS15, found in Clostridium botulinum (strain Eklund 17B / Type B).